Reading from the N-terminus, the 199-residue chain is Recombination protein RecR (199 aa).

The segment at 58 to 73 (CSVCNNITDVDPCVFC) adopts a C4-type zinc-finger fold. The 96-residue stretch at 81-176 (RLVCVVEEPT…RLTRIATGVP (96 aa)) folds into the Toprim domain.

This sequence belongs to the RecR family.

Functionally, may play a role in DNA repair. It seems to be involved in an RecBC-independent recombinational process of DNA repair. It may act with RecF and RecO. In Acidobacterium capsulatum (strain ATCC 51196 / DSM 11244 / BCRC 80197 / JCM 7670 / NBRC 15755 / NCIMB 13165 / 161), this protein is Recombination protein RecR.